Consider the following 159-residue polypeptide: Phosphopantetheine adenylyltransferase (159 aa).

Position 10 (threonine 10) interacts with substrate. Residues 10–11 (TF) and histidine 18 contribute to the ATP site. Substrate is bound by residues lysine 42, leucine 74, and arginine 88. ATP contacts are provided by residues 89-91 (GMR), glutamate 99, and 124-130 (WSYVSST).

It belongs to the bacterial CoaD family. In terms of assembly, homohexamer. Mg(2+) is required as a cofactor.

Its subcellular location is the cytoplasm. The enzyme catalyses (R)-4'-phosphopantetheine + ATP + H(+) = 3'-dephospho-CoA + diphosphate. It functions in the pathway cofactor biosynthesis; coenzyme A biosynthesis; CoA from (R)-pantothenate: step 4/5. Its function is as follows. Reversibly transfers an adenylyl group from ATP to 4'-phosphopantetheine, yielding dephospho-CoA (dPCoA) and pyrophosphate. This is Phosphopantetheine adenylyltransferase from Mannheimia succiniciproducens (strain KCTC 0769BP / MBEL55E).